Consider the following 40-residue polypeptide: Antimicrobial peptide 2 (40 aa).

The Chitin-binding type-1 domain occupies 1 to 40 (AQCGAQGGGATCPGGLCCSQWGWCGSTPKYCGAGCQSNCR). 4 disulfide bridges follow: Cys3-Cys18, Cys12-Cys24, Cys17-Cys31, and Cys35-Cys39.

In terms of processing, not glycosylated.

Functionally, antimicrobial peptide active against plant pathogenic fungi and Gram-negative and -positive bacteria. In Fagopyrum esculentum (Common buckwheat), this protein is Antimicrobial peptide 2.